The chain runs to 212 residues: Small ribosomal subunit protein uS2 (212 aa).

The segment at Leu190–Val212 is disordered.

Belongs to the universal ribosomal protein uS2 family.

In Ignicoccus hospitalis (strain KIN4/I / DSM 18386 / JCM 14125), this protein is Small ribosomal subunit protein uS2.